We begin with the raw amino-acid sequence, 200 residues long: Phospholipase A2 inhibitor gamma subunit B (200 aa).

The N-terminal stretch at 1 to 19 is a signal peptide; it reads MKFLLFCCLFGTFLATGMC. 8 disulfides stabilise this stretch: C22-C46, C25-C32, C39-C67, C73-C94, C95-C100, C120-C145, C138-C165, and C171-C191.

This sequence belongs to the CNF-like-inhibitor family. Heteromer composed of subunit A and subunit B.

The protein localises to the secreted. Functionally, inhibits the enzymatic activity of the phospholipase A2 (PLA2). The sequence is that of Phospholipase A2 inhibitor gamma subunit B from Elaphe climacophora (Japanese rat snake).